The sequence spans 697 residues: Phenylalanine--tRNA ligase beta subunit, chloroplastic (697 aa).

Residues 283-368 enclose the B5 domain; the sequence is NISRILFIDK…RIYGFDNFIS (86 aa). 4 residues coordinate Mg(2+): D346, D352, E355, and E356. The FDX-ACB domain occupies 609-697; it reads SSYPSLTRDI…IDDLLNEYKL (89 aa).

It belongs to the phenylalanyl-tRNA synthetase beta subunit family. Type 1 subfamily. Tetramer of two alpha and two beta subunits. Mg(2+) is required as a cofactor.

The protein resides in the plastid. The protein localises to the chloroplast. It catalyses the reaction tRNA(Phe) + L-phenylalanine + ATP = L-phenylalanyl-tRNA(Phe) + AMP + diphosphate + H(+). The protein is Phenylalanine--tRNA ligase beta subunit, chloroplastic of Gracilaria tenuistipitata var. liui (Red alga).